A 142-amino-acid chain; its full sequence is Nitrogen fixation protein NifU 2 (142 aa).

The interval 1–36 (MKDLFDESLTLDTGSAAPGTAPGRPRRRQPAGGKAP) is disordered. A compositionally biased stretch (low complexity) spans 14–23 (GSAAPGTAPG).

Belongs to the NifU family.

In terms of biological role, may be involved in the formation or repair of [Fe-S] clusters present in iron-sulfur proteins. The polypeptide is Nitrogen fixation protein NifU 2 (nifU2) (Rhodobacter capsulatus (Rhodopseudomonas capsulata)).